The chain runs to 330 residues: Flotillin-like protein FloA (330 aa).

2 consecutive transmembrane segments (helical) span residues 6–26 and 28–48; these read LFLL…FTFV and VMLW…TLIG.

This sequence belongs to the flotillin-like FloA family. As to quaternary structure, homooligomerizes.

It localises to the cell membrane. The protein localises to the membrane raft. In terms of biological role, found in functional membrane microdomains (FMM) that may be equivalent to eukaryotic membrane rafts. FMMs are highly dynamic and increase in number as cells age. Flotillins are thought to be important factors in membrane fluidity. This Bacillus licheniformis (strain ATCC 14580 / DSM 13 / JCM 2505 / CCUG 7422 / NBRC 12200 / NCIMB 9375 / NCTC 10341 / NRRL NRS-1264 / Gibson 46) protein is Flotillin-like protein FloA.